The sequence spans 102 residues: NADH-quinone oxidoreductase subunit K 1 (102 aa).

3 helical membrane passes run 5-25 (LYEV…CVVA), 30-50 (VIMM…TFVG), and 62-82 (VFSL…LAMV).

Belongs to the complex I subunit 4L family. NDH-1 is composed of 14 different subunits. Subunits NuoA, H, J, K, L, M, N constitute the membrane sector of the complex.

It is found in the cell inner membrane. The enzyme catalyses a quinone + NADH + 5 H(+)(in) = a quinol + NAD(+) + 4 H(+)(out). In terms of biological role, NDH-1 shuttles electrons from NADH, via FMN and iron-sulfur (Fe-S) centers, to quinones in the respiratory chain. The immediate electron acceptor for the enzyme in this species is believed to be ubiquinone. Couples the redox reaction to proton translocation (for every two electrons transferred, four hydrogen ions are translocated across the cytoplasmic membrane), and thus conserves the redox energy in a proton gradient. In Citrifermentans bemidjiense (strain ATCC BAA-1014 / DSM 16622 / JCM 12645 / Bem) (Geobacter bemidjiensis), this protein is NADH-quinone oxidoreductase subunit K 1.